A 127-amino-acid polypeptide reads, in one-letter code: Large ribosomal subunit protein bL20 (127 aa).

This sequence belongs to the bacterial ribosomal protein bL20 family.

Functionally, binds directly to 23S ribosomal RNA and is necessary for the in vitro assembly process of the 50S ribosomal subunit. It is not involved in the protein synthesizing functions of that subunit. The sequence is that of Large ribosomal subunit protein bL20 from Streptomyces griseus subsp. griseus (strain JCM 4626 / CBS 651.72 / NBRC 13350 / KCC S-0626 / ISP 5235).